The sequence spans 624 residues: Kelch-like ECH-associated protein 1 (624 aa).

Cys38 carries the S-(2-succinyl)cysteine modification. Residues Cys77–Glu149 form the BTB domain. Arg135 is covalently cross-linked (N5-[4-(S-L-cysteinyl)-5-methyl-1H-imidazol-2-yl]-L-ornithine (Arg-Cys) (interchain with C-151 in KEAP1)). S-(2-succinyl)cysteine is present on residues Cys151 and Cys241. At Cys151 the chain carries S-(2,3-dicarboxypropyl)cysteine; alternate. An S-nitrosocysteine; alternate modification is found at Cys151. An N5-[4-(S-L-cysteinyl)-5-methyl-1H-imidazol-2-yl]-L-ornithine (Cys-Arg) (interchain with R-135 in KEAP1) cross-link involves residue Cys151. The region spanning Ala184 to Gln286 is the BACK domain. 2 positions are modified to S-(2,3-dicarboxypropyl)cysteine: Cys257 and Cys273. Residues Cys288 and Cys319 each carry the S-(2-succinyl)cysteine modification. Cys288 bears the S-(2,3-dicarboxypropyl)cysteine; alternate mark. Kelch repeat units follow at residues Leu327–Gly372, Leu373–Gly423, His424–Arg470, Leu471–Ser517, Ile519–Gly564, and Arg565–Glu611. Position 434 is an S-cGMP-cysteine (Cys434). Residue Cys613 is modified to S-(2-succinyl)cysteine.

The protein belongs to the KEAP1 family. As to quaternary structure, component of the BCR(KEAP1) E3 ubiquitin ligase complex, at least composed of 2 molecules of CUL3, 2 molecules of KEAP1, and RBX1. Interacts with NFE2L2/NRF2; the interaction is direct. Forms a ternary complex with NFE2L2/NRF2 and PGAM5. Interacts with (phosphorylated) SQSTM1/p62; the interaction is direct and inactivates the BCR(KEAP1) complex by sequestering it in inclusion bodies, promoting its degradation. Interacts with NFE2L1. Interacts with BPTF and PTMA. Interacts with MAP1LC3B. Interacts indirectly with ENC1. Interacts with SESN1 and SESN2. Interacts with HSP90AA1 and HSP90AB1. Interacts with PGCKA1; this interaction prevents the ubiquitination of KEAP1 by TRIM25, thus protecting KEAP1 from degradation. Post-translationally, non-enzymatic covalent modifications of reactive cysteines by electrophile metabolites inactivate the BCR(KEAP1) complex. Accumulation of fumarate promotes the formation of cysteine S-succination (S-(2-succinyl)cysteine), leading to inactivate the BCR(KEAP1) complex and promote NFE2L2/NRF2 nuclear accumulation and activation. Nitric oxide-dependent 8-Nitro-cGMP formation promotes cysteine guanylation (S-cGMP-cysteine), leading to NFE2L2/NRF2 nuclear accumulation and activation. Itaconate, an anti-inflammatory metabolite generated in response to lipopolysaccharide, alkylates cysteines, activating NFE2L2/NRF2. Methylglyoxal, a reactive metabolite that accumulates when the glycolytic enzyme PGK1 is inhibited, promotes formation of a methylimidazole cross-link between proximal Cys-151 and Arg-135 on another KEAP1 molecule, resulting in an inactive dimer that inactivates the BCR(KEAP1) complex. Degraded via a proteasomal-independent process during selective autophagy: interaction with phosphorylated SQSTM1/p62 sequesters KEAP1 in inclusion bodies, leading to its degradation. In terms of processing, auto-ubiquitinated by the BCR(KEAP1) complex. Quinone-induced oxidative stress, but not sulforaphane, increases its ubiquitination. Ubiquitination and subsequent degradation is most pronounced following prolonged exposure of cells to oxidative stress, particularly in glutathione-deficient cells that are highly susceptible to oxidative stress. Deubiquitinated by USP25; leading to stabilization. Ubiquitinated by TRIM25; leading to degradation upon ER stress.

The protein resides in the cytoplasm. It localises to the nucleus. It functions in the pathway protein modification; protein ubiquitination. With respect to regulation, ubiquitin ligase activity of the BCR(KEAP1) complex is inhibited by oxidative stress and electrophile metabolites such as sulforaphane. Electrophile metabolites react with reactive cysteine residues in KEAP1 and trigger non-enzymatic covalent modifications of these cysteine residues, leading to inactivate the ubiquitin ligase activity of the BCR(KEAP1) complex. Selective autophagy also inactivates the BCR(KEAP1) complex via interaction between KEAP1 and SQSTM1/p62, which sequesters the complex in inclusion bodies and promotes its degradation. Substrate-specific adapter of a BCR (BTB-CUL3-RBX1) E3 ubiquitin ligase complex that regulates the response to oxidative stress by targeting NFE2L2/NRF2 for ubiquitination. KEAP1 acts as a key sensor of oxidative and electrophilic stress: in normal conditions, the BCR(KEAP1) complex mediates ubiquitination and degradation of NFE2L2/NRF2, a transcription factor regulating expression of many cytoprotective genes. In response to oxidative stress, different electrophile metabolites trigger non-enzymatic covalent modifications of highly reactive cysteine residues in KEAP1, leading to inactivate the ubiquitin ligase activity of the BCR(KEAP1) complex, promoting NFE2L2/NRF2 nuclear accumulation and expression of phase II detoxifying enzymes. In response to selective autophagy, KEAP1 is sequestered in inclusion bodies following its interaction with SQSTM1/p62, leading to inactivation of the BCR(KEAP1) complex and activation of NFE2L2/NRF2. The BCR(KEAP1) complex also mediates ubiquitination of SQSTM1/p62, increasing SQSTM1/p62 sequestering activity and degradation. The BCR(KEAP1) complex also targets BPTF and PGAM5 for ubiquitination and degradation by the proteasome. The chain is Kelch-like ECH-associated protein 1 from Rattus norvegicus (Rat).